The primary structure comprises 389 residues: Large envelope protein (389 aa).

Met-1 carries the N-acetylmethionine modification. Gly-2 carries the N-myristoyl glycine; by host lipid modification. The pre-S1 stretch occupies residues 2–108 (GQNLSVTNPL…PPLRDTHPQA (107 aa)). The tract at residues 2-163 (GQNLSVTNPL…FLKTGDPALN (162 aa)) is pre-S. The Virion surface; in external conformation segment spans residues 2–170 (GQNLSVTNPL…ALNMESISSG (169 aa)). At 2–242 (GQNLSVTNPL…PGYRWMCLRR (241 aa)) the chain is on the intravirion; in internal conformation side. The tract at residues 78 to 105 (PAVPPPASTNRQSGRRPTPISPPLRDTH) is disordered. Residues 109 to 163 (MQWNSTVFHQALQDPRVRGLYFPAGGSSSGTVSPVPTTASPISSTFLKTGDPALN) form a pre-S2 region. A helical membrane pass occupies residues 171–191 (FLGPLLVLQAGFFLLTKILTI). The Intravirion; in external conformation portion of the chain corresponds to 192 to 242 (PQSLDSWWTSLNFLGGAPVCPGQNSQSLTSNHSPTSCPPICPGYRWMCLRR). A helical transmembrane segment spans residues 243–263 (FIIFLFILLLCLIFLLVLLDY). At 264–337 (RGMLPVCPLL…WASVRFSWLN (74 aa)) the chain is on the virion surface side. Asn-309 carries an N-linked (GlcNAc...) asparagine; by host glycan. Residues 338-358 (LLVPFVQWFAGLSPTVWLSVI) traverse the membrane as a helical segment. Residues 359 to 364 (WMIWYW) lie on the Intravirion side of the membrane. Residues 365 to 387 (GPSLYNILSPFIPLLPIFFCLWA) form a helical membrane-spanning segment. Residues 388 to 389 (YI) lie on the Virion surface side of the membrane.

It belongs to the orthohepadnavirus major surface antigen family. In terms of assembly, in its internal form (Li-HBsAg), interacts with the capsid protein and with the isoform S. Interacts with host chaperone CANX. As to quaternary structure, associates with host chaperone CANX through its pre-S2 N glycan; this association may be essential for isoform M proper secretion. Interacts with isoform L. Interacts with the antigens of satellite virus HDV (HDVAgs); this interaction is required for encapsidation of HDV genomic RNA. Isoform M is N-terminally acetylated by host at a ratio of 90%, and N-glycosylated by host at the pre-S2 region. In terms of processing, myristoylated.

The protein localises to the virion membrane. Functionally, the large envelope protein exists in two topological conformations, one which is termed 'external' or Le-HBsAg and the other 'internal' or Li-HBsAg. In its external conformation the protein attaches the virus to cell receptors and thereby initiating infection. This interaction determines the species specificity and liver tropism. This attachment induces virion internalization predominantly through caveolin-mediated endocytosis. The large envelope protein also assures fusion between virion membrane and endosomal membrane. In its internal conformation the protein plays a role in virion morphogenesis and mediates the contact with the nucleocapsid like a matrix protein. In terms of biological role, the middle envelope protein plays an important role in the budding of the virion. It is involved in the induction of budding in a nucleocapsid independent way. In this process the majority of envelope proteins bud to form subviral lipoprotein particles of 22 nm of diameter that do not contain a nucleocapsid. In Pongo pygmaeus (Bornean orangutan), this protein is Large envelope protein.